Reading from the N-terminus, the 317-residue chain is Transaldolase (317 aa).

Lysine 132 functions as the Schiff-base intermediate with substrate in the catalytic mechanism.

The protein belongs to the transaldolase family. Type 1 subfamily. In terms of assembly, homodimer.

The protein localises to the cytoplasm. It catalyses the reaction D-sedoheptulose 7-phosphate + D-glyceraldehyde 3-phosphate = D-erythrose 4-phosphate + beta-D-fructose 6-phosphate. It functions in the pathway carbohydrate degradation; pentose phosphate pathway; D-glyceraldehyde 3-phosphate and beta-D-fructose 6-phosphate from D-ribose 5-phosphate and D-xylulose 5-phosphate (non-oxidative stage): step 2/3. In terms of biological role, transaldolase is important for the balance of metabolites in the pentose-phosphate pathway. The protein is Transaldolase of Shewanella amazonensis (strain ATCC BAA-1098 / SB2B).